Reading from the N-terminus, the 418-residue chain is UPF0754 membrane protein alr5253 (418 aa).

2 helical membrane-spanning segments follow: residues 10 to 30 (WSHL…GYFT) and 394 to 414 (IVSL…AFFI).

This sequence belongs to the UPF0754 family.

Its subcellular location is the cell inner membrane. This chain is UPF0754 membrane protein alr5253, found in Nostoc sp. (strain PCC 7120 / SAG 25.82 / UTEX 2576).